Consider the following 270-residue polypeptide: 3-phenylpropionate-dihydrodiol/cinnamic acid-dihydrodiol dehydrogenase (270 aa).

10 to 34 is an NAD(+) binding site; sequence FITGGGSGLGLALVERFIEKGAQVA. Serine 143 provides a ligand contact to substrate. The Proton acceptor role is filled by tyrosine 156.

The protein belongs to the short-chain dehydrogenases/reductases (SDR) family.

The catalysed reaction is 3-(cis-5,6-dihydroxycyclohexa-1,3-dien-1-yl)propanoate + NAD(+) = 3-(2,3-dihydroxyphenyl)propanoate + NADH + H(+). The enzyme catalyses (2E)-3-(cis-5,6-dihydroxycyclohexa-1,3-dien-1-yl)prop-2-enoate + NAD(+) = (2E)-3-(2,3-dihydroxyphenyl)prop-2-enoate + NADH + H(+). The protein operates within aromatic compound metabolism; 3-phenylpropanoate degradation. Converts 3-phenylpropionate-dihydrodiol (PP-dihydrodiol) and cinnamic acid-dihydrodiol (CI-dihydrodiol) into 3-(2,3-dihydroxylphenyl)propanoic acid (DHPP) and 2,3-dihydroxicinnamic acid (DHCI), respectively. The chain is 3-phenylpropionate-dihydrodiol/cinnamic acid-dihydrodiol dehydrogenase (hcaB) from Escherichia coli.